A 634-amino-acid polypeptide reads, in one-letter code: Phototropic-responsive NPH3 family protein NPY2 (634 aa).

A BTB domain is found at 29–97 (SDISVDVEGS…CYGMTVTLSA (69 aa)). Positions 207-488 (DWWVEDLCEL…VQVLFFEQVR (282 aa)) constitute an NPH3 domain. Residue Y429 is modified to Phosphotyrosine. 2 disordered regions span residues 492 to 517 (SSGSSTPDLPRGMGRELRSCGTYGSS) and 584 to 634 (QLQS…VSVS). Gly residues predominate over residues 588-602 (KGGGEKNNGGGGGGS). Residues 619-634 (KTATPSRNLTRRVSVS) are compositionally biased toward polar residues.

Belongs to the NPH3 family. In terms of tissue distribution, specifically expressed in the hypophysis and the root meristems in the embryos. Highly expressed in primary root tips and radicles.

It is found in the cell membrane. The protein localises to the cytoplasm. The protein resides in the cytosol. It functions in the pathway protein modification; protein ubiquitination. Its function is as follows. May act as a substrate-specific adapter of an E3 ubiquitin-protein ligase complex (CUL3-RBX1-BTB) which mediates the ubiquitination and subsequent proteasomal degradation of target proteins. Plays an essential role in auxin-mediated organogenesis and in root gravitropic responses through the control of PIN proteins (e.g. PIN1 and PIN2) polarity in the root tip endodermal cell layer and in shoot epidermis. Recruited to the plasma membrane by PINs (e.g. PIN1 and PIN2) and, in concert with AGC kinases-mediated (e.g. D6PK and PID) PINs phosphorylation, maintains their polarity through limiting lateral diffusion-based escape. The protein is Phototropic-responsive NPH3 family protein NPY2 of Arabidopsis thaliana (Mouse-ear cress).